The following is a 490-amino-acid chain: MIENENTSLLSTSSSSTSSSPNNANSPSSLNIGISNSENGTPRKDNTSGNNSPSAQITKYNGIDISNNSSRNSSRPNSRSGYRGDSSSNNNNNNNNNNNNNNNNNNINKHNSIVYNKSNNKLNSIGGSNNDLQGGGGGNGNGNGNGSSKYKIGINNKDVEEKIEIKKQKKMNRTNNQKFWRIVGSILQIIGLSSIVFTIFIGLYIDGYIDWSYWILFIPVYVILAASYLATGSRVLSNLVSWIIRLVWRLSVFGLTVFVVFTIIHFKYNTFGFSVMMIPLLFTFGSVFVMGIFSLLFGIIFVDGKSTPQRKTKYIVNGLPLLFTGAILTPAAIMIALKLDGLYDAKLAVCFVSLFIGDIIASCFSFFLLIFSLGSKDTATFSIGQLLSIIFITICSIVFKVLLILATDQQHNINSLFLLIPLLVAEAFMVFCGINLFLRPPRVIVDNSEELAKSNMINNQDSSESESDDETEVSFKDREDEESEKLISNL.

Residues Met-1–Asn-31 are compositionally biased toward low complexity. Disordered regions lie at residues Met-1–Lys-151 and Asn-455–Leu-490. The segment covering Thr-47–Lys-59 has biased composition (polar residues). 2 stretches are compositionally biased toward low complexity: residues Ser-66–Ser-80 and Asn-89–Asn-108. Over residues Lys-109–Ile-125 the composition is skewed to polar residues. Positions Gln-133 to Asn-145 are enriched in gly residues. Residues Ser-463–Glu-472 show a composition bias toward acidic residues.

Belongs to the TMEM185 family.

The protein is Transmembrane protein 185-like of Dictyostelium discoideum (Social amoeba).